The primary structure comprises 356 residues: Guanine nucleotide-binding protein alpha-2 subunit (356 aa).

Residue G2 is the site of N-myristoyl glycine attachment. C4 is lipidated: S-palmitoyl cysteine. The G-alpha domain maps to 35 to 356; the sequence is REVKLLLLGA…LTNNLRDIVL (322 aa). The G1 motif stretch occupies residues 38-51; it reads KLLLLGAGESGKST. Positions 46, 47, 48, 49, 50, 51, 153, 178, 184, 206, 272, 273, 275, and 329 each coordinate GTP. A Mg(2+)-binding site is contributed by S50. The G2 motif stretch occupies residues 176 to 184; it reads DILRCRNKT. T184 provides a ligand contact to Mg(2+). The segment at 199 to 208 is G3 motif; that stretch reads YRIFDVGGQR. A G4 motif region spans residues 268 to 275; it reads ILFLNKVD. The interval 327 to 332 is G5 motif; sequence TNATDV.

The protein belongs to the G-alpha family. As to quaternary structure, g proteins are composed of 3 units; alpha, beta and gamma. The alpha chain contains the guanine nucleotide binding site. It depends on Mg(2+) as a cofactor.

Guanine nucleotide-binding proteins (G proteins) are involved as modulators or transducers in various transmembrane signaling systems. The sequence is that of Guanine nucleotide-binding protein alpha-2 subunit (GPA2) from Mycosarcoma maydis (Corn smut fungus).